We begin with the raw amino-acid sequence, 367 residues long: Glutamate 5-kinase (367 aa).

Residue lysine 10 coordinates ATP. Substrate is bound by residues serine 50, aspartate 137, and asparagine 149. ATP contacts are provided by residues 169–170 (TD) and 211–217 (TGGMSTK). The 79-residue stretch at 275-353 (AGIITIDAGA…QDIEQVLGYE (79 aa)) folds into the PUA domain.

The protein belongs to the glutamate 5-kinase family.

Its subcellular location is the cytoplasm. The enzyme catalyses L-glutamate + ATP = L-glutamyl 5-phosphate + ADP. Its pathway is amino-acid biosynthesis; L-proline biosynthesis; L-glutamate 5-semialdehyde from L-glutamate: step 1/2. In terms of biological role, catalyzes the transfer of a phosphate group to glutamate to form L-glutamate 5-phosphate. The polypeptide is Glutamate 5-kinase (Pasteurella multocida (strain Pm70)).